The primary structure comprises 283 residues: Digeranylgeranylglyceryl phosphate synthase (283 aa).

8 helical membrane-spanning segments follow: residues 5-27, 37-57, 85-105, 128-148, 152-172, 203-223, 228-248, and 263-283; these read VEIIRPGNVIMAIIAVILVAILA, AMLAVFFAMSAGNVINDYFDY, LLFILAAIVGFLISCLVDTWI, PLIGNLTVGFMTGLCFIFAGY, EGLIIYESYLLAFFALIMTTA, AIIAISLIIIDCALCPLLYIY, INYLIVVSIAVLIFLYGAVLL, and LKTGMLIAFIAFAIGTFTITF.

Belongs to the UbiA prenyltransferase family. DGGGP synthase subfamily. The cofactor is Mg(2+).

Its subcellular location is the cell membrane. It carries out the reaction sn-3-O-(geranylgeranyl)glycerol 1-phosphate + (2E,6E,10E)-geranylgeranyl diphosphate = 2,3-bis-O-(geranylgeranyl)-sn-glycerol 1-phosphate + diphosphate. It participates in membrane lipid metabolism; glycerophospholipid metabolism. In terms of biological role, prenyltransferase that catalyzes the transfer of the geranylgeranyl moiety of geranylgeranyl diphosphate (GGPP) to the C2 hydroxyl of (S)-3-O-geranylgeranylglyceryl phosphate (GGGP). This reaction is the second ether-bond-formation step in the biosynthesis of archaeal membrane lipids. In Methanobrevibacter smithii (strain ATCC 35061 / DSM 861 / OCM 144 / PS), this protein is Digeranylgeranylglyceryl phosphate synthase.